The chain runs to 1187 residues: DNA-directed RNA polymerase subunit beta (1187 aa).

A disordered region spans residues 1150–1187 (KDEDDDPASSADDLGFNIGARPDAAAKEDQKAEEPEYQ). The span at 1173 to 1187 (AAAKEDQKAEEPEYQ) shows a compositional bias: basic and acidic residues.

It belongs to the RNA polymerase beta chain family. The RNAP catalytic core consists of 2 alpha, 1 beta, 1 beta' and 1 omega subunit. When a sigma factor is associated with the core the holoenzyme is formed, which can initiate transcription.

It catalyses the reaction RNA(n) + a ribonucleoside 5'-triphosphate = RNA(n+1) + diphosphate. Its function is as follows. DNA-dependent RNA polymerase catalyzes the transcription of DNA into RNA using the four ribonucleoside triphosphates as substrates. The protein is DNA-directed RNA polymerase subunit beta of Bifidobacterium longum (strain NCC 2705).